A 175-amino-acid polypeptide reads, in one-letter code: Crossover junction endodeoxyribonuclease RuvC (175 aa).

Residues Asp16, Glu76, and Asp148 contribute to the active site. Asp16, Glu76, and Asp148 together coordinate Mg(2+).

It belongs to the RuvC family. As to quaternary structure, homodimer which binds Holliday junction (HJ) DNA. The HJ becomes 2-fold symmetrical on binding to RuvC with unstacked arms; it has a different conformation from HJ DNA in complex with RuvA. In the full resolvosome a probable DNA-RuvA(4)-RuvB(12)-RuvC(2) complex forms which resolves the HJ. The cofactor is Mg(2+).

The protein localises to the cytoplasm. It catalyses the reaction Endonucleolytic cleavage at a junction such as a reciprocal single-stranded crossover between two homologous DNA duplexes (Holliday junction).. Its function is as follows. The RuvA-RuvB-RuvC complex processes Holliday junction (HJ) DNA during genetic recombination and DNA repair. Endonuclease that resolves HJ intermediates. Cleaves cruciform DNA by making single-stranded nicks across the HJ at symmetrical positions within the homologous arms, yielding a 5'-phosphate and a 3'-hydroxyl group; requires a central core of homology in the junction. The consensus cleavage sequence is 5'-(A/T)TT(C/G)-3'. Cleavage occurs on the 3'-side of the TT dinucleotide at the point of strand exchange. HJ branch migration catalyzed by RuvA-RuvB allows RuvC to scan DNA until it finds its consensus sequence, where it cleaves and resolves the cruciform DNA. In Bradyrhizobium diazoefficiens (strain JCM 10833 / BCRC 13528 / IAM 13628 / NBRC 14792 / USDA 110), this protein is Crossover junction endodeoxyribonuclease RuvC.